We begin with the raw amino-acid sequence, 322 residues long: Protein mono-ADP-ribosyltransferase PARP16 (322 aa).

The Cytoplasmic portion of the chain corresponds to 1 to 287 (MQPSGWAAAR…RASSQLSWFS (287 aa)). The PARP alpha-helical domain maps to 5 to 91 (GWAAAREAAG…AWDLVSWILS (87 aa)). Asp37 carries the ADP-ribosyl aspartic acid modification. Glu70 carries the post-translational modification ADP-ribosyl glutamic acid. One can recognise a PARP catalytic domain in the interval 94–279 (VLTIHSAGKA…VYSQKPPKRA (186 aa)). An N6-(ADP-ribosyl)lysine mark is found at Lys110 and Lys137. 3 residues coordinate NAD(+): His152, Tyr182, and Tyr254. A helical membrane pass occupies residues 288 to 308 (SHWFTVMISLYLLLLLIVSVI). The Lumenal portion of the chain corresponds to 309 to 322 (NSSAFQHFWNRAKR).

The protein belongs to the ARTD/PARP family. Interacts with KPNB1. In terms of processing, auto-mono-ADP-ribosylated.

The protein resides in the endoplasmic reticulum membrane. It carries out the reaction L-aspartyl-[protein] + NAD(+) = 4-O-(ADP-D-ribosyl)-L-aspartyl-[protein] + nicotinamide. The enzyme catalyses L-glutamyl-[protein] + NAD(+) = 5-O-(ADP-D-ribosyl)-L-glutamyl-[protein] + nicotinamide. The catalysed reaction is L-lysyl-[protein] + NAD(+) = N(6)-(ADP-D-ribosyl)-L-lysyl-[protein] + nicotinamide + H(+). With respect to regulation, in absence of activation signal, PARP16 is autoinhibited by the PARP alpha-helical domain (also named HD region), which prevents effective NAD(+)-binding. Activity is highly stimulated by signals, which unfold the PARP alpha-helical domain, relieving autoinhibition. Intracellular mono-ADP-ribosyltransferase that plays a role in different processes, such as protein translation and unfolded protein response (UPR), through the mono-ADP-ribosylation of proteins involved in those processes. Acts as an inhibitor of protein translation by catalyzing mono-ADP-ribosylation of ribosomal subunits, such as RPL14 and RPS6, thereby inhibiting polysome assembly and mRNA loading. Mono-ADP-ribosylation of ribosomal subunits is promoted by NMNAT2. Involved in the unfolded protein response (UPR) by ADP-ribosylating and activating EIF2AK3 and ERN1, two important UPR effectors. May also mediate mono-ADP-ribosylation of karyopherin KPNB1 a nuclear import factor. May not modify proteins on arginine or cysteine residues compared to other mono-ADP-ribosyltransferases. The sequence is that of Protein mono-ADP-ribosyltransferase PARP16 from Homo sapiens (Human).